Reading from the N-terminus, the 258-residue chain is MPKVSIVEKSQFFAKAVVEGVPPSLINSLRRVIISELPVLAIDSVVVVNNTSVMYDEMLAHRLGLIPLTTPLKDLPPIEDCESGLVDPSECTVRLTLQVNATGDVVVYAGDLVADRPDVAPVYKDIPIVKLVEGQSVVVEAYAKLGRARDHAKWQAALASYYYYPKVVVKREECREMCKEVCRNLENPLECTFNKATTCKEMCGGGIVVEWEKDKYVFWIESFGNYDAETALREAFRILKKKFEDFLDALSRKAEAKL.

The protein belongs to the archaeal Rpo3/eukaryotic RPB3 RNA polymerase subunit family. In terms of assembly, part of the RNA polymerase complex.

The protein resides in the cytoplasm. The catalysed reaction is RNA(n) + a ribonucleoside 5'-triphosphate = RNA(n+1) + diphosphate. Functionally, DNA-dependent RNA polymerase (RNAP) catalyzes the transcription of DNA into RNA using the four ribonucleoside triphosphates as substrates. The protein is DNA-directed RNA polymerase subunit Rpo3 of Pyrobaculum calidifontis (strain DSM 21063 / JCM 11548 / VA1).